The sequence spans 179 residues: MLYLRDHQPVAVLFDDNFEKIQGVVDRNGYVFKNVTPQQITTIEFLLNKKLLKVRGFKNIIIRWAALYLLICDSQTKIYEVILEKGHDITFGTEAGYVFFGEYINMDQLRKRFFYMDHLHNLWREGNLFSEVHVNLTKSAHCYIDLTENKTPILSMLDDVSSFRIKDDNYRWPSQLKDE.

The protein localises to the plastid. It localises to the cyanelle. This is an uncharacterized protein from Cyanophora paradoxa.